The following is a 403-amino-acid chain: S-adenosylmethionine synthase (403 aa).

His17 is an ATP binding site. Asp19 provides a ligand contact to Mg(2+). Glu45 contacts K(+). Glu58 and Gln104 together coordinate L-methionine. The tract at residues 104–114 (QSPDIAQGVDT) is flexible loop. Residues 179-181 (DGK), 250-251 (KF), Asp259, 265-266 (RK), Ala282, and Lys286 each bind ATP. Residue Asp259 coordinates L-methionine. L-methionine is bound at residue Lys290.

The protein belongs to the AdoMet synthase family. As to quaternary structure, homotetramer; dimer of dimers. Requires Mg(2+) as cofactor. The cofactor is K(+).

It localises to the cytoplasm. The enzyme catalyses L-methionine + ATP + H2O = S-adenosyl-L-methionine + phosphate + diphosphate. The protein operates within amino-acid biosynthesis; S-adenosyl-L-methionine biosynthesis; S-adenosyl-L-methionine from L-methionine: step 1/1. Catalyzes the formation of S-adenosylmethionine (AdoMet) from methionine and ATP. The overall synthetic reaction is composed of two sequential steps, AdoMet formation and the subsequent tripolyphosphate hydrolysis which occurs prior to release of AdoMet from the enzyme. This is S-adenosylmethionine synthase from Mycobacterium tuberculosis (strain ATCC 25177 / H37Ra).